The chain runs to 562 residues: Formate--tetrahydrofolate ligase (562 aa).

71–78 (TPAGEGKS) is an ATP binding site.

The protein belongs to the formate--tetrahydrofolate ligase family.

It catalyses the reaction (6S)-5,6,7,8-tetrahydrofolate + formate + ATP = (6R)-10-formyltetrahydrofolate + ADP + phosphate. The protein operates within one-carbon metabolism; tetrahydrofolate interconversion. This Bacillus thuringiensis (strain Al Hakam) protein is Formate--tetrahydrofolate ligase.